Consider the following 701-residue polypeptide: Alpha-1,4-glucan:maltose-1-phosphate maltosyltransferase (701 aa).

Residues His286–Val317 are disordered. Alpha-maltose 1-phosphate contacts are provided by Lys288, Gln348, and Asp383. The Nucleophile role is filled by Asp418. Asn419 lines the alpha-maltose 1-phosphate pocket. The Proton donor role is filled by Glu447. Lys557–Tyr558 is a binding site for alpha-maltose 1-phosphate.

This sequence belongs to the glycosyl hydrolase 13 family. GlgE subfamily. In terms of assembly, homodimer.

It carries out the reaction alpha-maltose 1-phosphate + [(1-&gt;4)-alpha-D-glucosyl](n) = [(1-&gt;4)-alpha-D-glucosyl](n+2) + phosphate. Its pathway is glycan biosynthesis; glycogen biosynthesis. In terms of biological role, essential maltosyltransferase that uses maltose 1-phosphate (M1P) as the sugar donor to elongate linear or branched alpha-(1-&gt;4)-glucans. Maltooligosaccharides with a degree of polymerization (DP) superior or equal to 4 are efficient acceptors, with DP5 being optimal in the GlgE-catalyzed polymerization with M1P. Is specific for the alpha-anomer of M1P as substrate, since the beta-anomer of M1P gives no activity. Exhibits an alpha-retaining catalytic mechanism. Is also able to catalyze the reverse reaction in vitro, releasing M1P from glycogen in the presence of inorganic phosphate. Also catalyzes disproportionation reactions through maltosyl transfer between maltooligosaccharides. Is involved in a branched alpha-glucan biosynthetic pathway from trehalose, together with TreS, Mak and GlgB. This chain is Alpha-1,4-glucan:maltose-1-phosphate maltosyltransferase (glgE), found in Mycobacterium tuberculosis (strain CDC 1551 / Oshkosh).